A 113-amino-acid polypeptide reads, in one-letter code: Large ribosomal subunit protein uL22 (113 aa).

The protein belongs to the universal ribosomal protein uL22 family. As to quaternary structure, part of the 50S ribosomal subunit.

Functionally, this protein binds specifically to 23S rRNA; its binding is stimulated by other ribosomal proteins, e.g. L4, L17, and L20. It is important during the early stages of 50S assembly. It makes multiple contacts with different domains of the 23S rRNA in the assembled 50S subunit and ribosome. In terms of biological role, the globular domain of the protein is located near the polypeptide exit tunnel on the outside of the subunit, while an extended beta-hairpin is found that lines the wall of the exit tunnel in the center of the 70S ribosome. This Chloroflexus aggregans (strain MD-66 / DSM 9485) protein is Large ribosomal subunit protein uL22.